The sequence spans 188 residues: MVNQSKPEVAIFGGSFDPPHKGHQQIVRKAVQILDIDKLIVLPAYLNPFKNVSLANPEKRLEWCYQLFDGIPKVVVDDYEIRQNKSVRTSQSVKHFNNTYSVKYLIIGSDNLSTLTKWHEFKWLNDHITWVIVTRKGHPVQTEGLKSWRILEIDFPISSTTIREKKDLRYIDNKIKQSVEKTIKDKKE.

It belongs to the NadD family.

The catalysed reaction is nicotinate beta-D-ribonucleotide + ATP + H(+) = deamido-NAD(+) + diphosphate. Its pathway is cofactor biosynthesis; NAD(+) biosynthesis; deamido-NAD(+) from nicotinate D-ribonucleotide: step 1/1. In terms of biological role, catalyzes the reversible adenylation of nicotinate mononucleotide (NaMN) to nicotinic acid adenine dinucleotide (NaAD). In Sulfurovum sp. (strain NBC37-1), this protein is Probable nicotinate-nucleotide adenylyltransferase.